The sequence spans 837 residues: Tuftelin-interacting protein 11 (837 aa).

Basic and acidic residues-rich tracts occupy residues 1 to 13 (MSLSHLYRDGEGR) and 53 to 64 (VWAERDSDDERP). Disordered stretches follow at residues 1 to 21 (MSLSHLYRDGEGRIDDDDDER), 53 to 72 (VWAERDSDDERPSFGGKRAR), and 85 to 133 (LKKG…KGFA). The tract at residues 1–50 (MSLSHLYRDGEGRIDDDDDERENFEITDWDLQNEFNPNRQRHWQTKEEAT) is required for interaction with DHX15. Phosphoserine is present on residues Ser2, Ser59, and Ser98. A compositionally biased stretch (acidic residues) spans 91-102 (EEAELEDSDDEE). A compositionally biased stretch (basic and acidic residues) spans 103-116 (RPVKQDDFPKDFGP). The residue at position 144 (Ser144) is a Phosphoserine. Positions 149 to 195 (TKGIGQKLLQKMGYVPGRGLGKNAQGIINPIEAKQRKGKGAVGAYGS) constitute a G-patch domain. The tract at residues 179–236 (IEAKQRKGKGAVGAYGSERTTQSMQDFPVVDSEEEAEEEFQKELSQWRKDPSGSKKKP) is disordered. Ser210 is subject to Phosphoserine. Over residues 217-231 (EFQKELSQWRKDPSG) the composition is skewed to basic and acidic residues. Residues 700–705 (VKDKFN) carry the Nuclear localization signal motif. The tract at residues 710–734 (IMNRAVSSNVGAYMQPGARENIAYL) is required for nuclear speckle localization.

This sequence belongs to the TFP11/STIP family. As to quaternary structure, identified in the spliceosome C complex. Found in the Intron Large (IL) complex, a post-mRNA release spliceosomal complex containing the excised intron, U2, U5 and U6 snRNPs, and splicing factors. Interacts with TUFT1. Interacts with DHX15; indicative for a recruitment of DHX15 to the IL complex. Interacts with GCFC2.

Its subcellular location is the cytoplasm. It is found in the nucleus. In terms of biological role, involved in pre-mRNA splicing, specifically in spliceosome disassembly during late-stage splicing events. Intron turnover seems to proceed through reactions in two lariat-intron associated complexes termed Intron Large (IL) and Intron Small (IS). In cooperation with DHX15 seems to mediate the transition of the U2, U5 and U6 snRNP-containing IL complex to the snRNP-free IS complex leading to efficient debranching and turnover of excised introns. May play a role in the differentiation of ameloblasts and odontoblasts or in the forming of the enamel extracellular matrix. This chain is Tuftelin-interacting protein 11 (TFIP11), found in Macaca mulatta (Rhesus macaque).